A 576-amino-acid polypeptide reads, in one-letter code: Arginine--tRNA ligase (576 aa).

The short motif at 122–132 is the 'HIGH' region element; that stretch reads PNVAKQMHVGH.

It belongs to the class-I aminoacyl-tRNA synthetase family. As to quaternary structure, monomer.

The protein localises to the cytoplasm. It catalyses the reaction tRNA(Arg) + L-arginine + ATP = L-arginyl-tRNA(Arg) + AMP + diphosphate. The polypeptide is Arginine--tRNA ligase (Yersinia pestis bv. Antiqua (strain Antiqua)).